A 299-amino-acid chain; its full sequence is MIKVEKFSDEISKAEVLVEALPYIKKFAGSIAVIKFGGNAMKDPQIKSMVAEDIVLMKYVGLNPVIVHGGGPDINKMLASLNIETKFVNGLRVTDEKVMEIVEMVLVGKINKEITSLINKTGGKAVGLSGKDANLLLAEKDLSQGDLGYVGKVVNVNREVILNLIEKDYIPVIAPCAIGRDWKTYNVNADIAAGKIASSLNADKFVLLTDVEGVLKNKEDEESVISRLSYREAKDLLNSQFITGGMIPKLKCCIQALEDGVKRAHIIDGRIPHALLLEIYTDKGVGTMIAKEVYDNDNL.

Residues 70-71 (GG), arginine 92, and asparagine 186 each bind substrate.

Belongs to the acetylglutamate kinase family. ArgB subfamily.

The protein localises to the cytoplasm. The catalysed reaction is N-acetyl-L-glutamate + ATP = N-acetyl-L-glutamyl 5-phosphate + ADP. It participates in amino-acid biosynthesis; L-arginine biosynthesis; N(2)-acetyl-L-ornithine from L-glutamate: step 2/4. Its function is as follows. Catalyzes the ATP-dependent phosphorylation of N-acetyl-L-glutamate. This chain is Acetylglutamate kinase, found in Petrotoga mobilis (strain DSM 10674 / SJ95).